Here is a 291-residue protein sequence, read N- to C-terminus: Pyridoxal 5'-phosphate synthase subunit PdxS (291 aa).

Position 23 (D23) interacts with D-ribose 5-phosphate. K80 functions as the Schiff-base intermediate with D-ribose 5-phosphate in the catalytic mechanism. D-ribose 5-phosphate is bound at residue G152. D-glyceraldehyde 3-phosphate is bound at residue R164. D-ribose 5-phosphate contacts are provided by residues G213 and 234–235; that span reads GS.

Belongs to the PdxS/SNZ family. In terms of assembly, in the presence of PdxT, forms a dodecamer of heterodimers.

It catalyses the reaction aldehydo-D-ribose 5-phosphate + D-glyceraldehyde 3-phosphate + L-glutamine = pyridoxal 5'-phosphate + L-glutamate + phosphate + 3 H2O + H(+). The protein operates within cofactor biosynthesis; pyridoxal 5'-phosphate biosynthesis. Functionally, catalyzes the formation of pyridoxal 5'-phosphate from ribose 5-phosphate (RBP), glyceraldehyde 3-phosphate (G3P) and ammonia. The ammonia is provided by the PdxT subunit. Can also use ribulose 5-phosphate and dihydroxyacetone phosphate as substrates, resulting from enzyme-catalyzed isomerization of RBP and G3P, respectively. The polypeptide is Pyridoxal 5'-phosphate synthase subunit PdxS (Bifidobacterium adolescentis (strain ATCC 15703 / DSM 20083 / NCTC 11814 / E194a)).